The sequence spans 473 residues: Thermostable beta-glucosidase B (473 aa).

Catalysis depends on E196, which acts as the Proton donor. E378 serves as the catalytic Nucleophile.

It belongs to the glycosyl hydrolase 1 family.

It is found in the cytoplasm. It catalyses the reaction Hydrolysis of terminal, non-reducing beta-D-glucosyl residues with release of beta-D-glucose.. The polypeptide is Thermostable beta-glucosidase B (bglB) (Thermobispora bispora (Microbispora bispora)).